An 88-amino-acid chain; its full sequence is DNA-directed RNA polymerase subunit omega (88 aa).

Belongs to the RNA polymerase subunit omega family. The RNAP catalytic core consists of 2 alpha, 1 beta, 1 beta' and 1 omega subunit. When a sigma factor is associated with the core the holoenzyme is formed, which can initiate transcription.

It catalyses the reaction RNA(n) + a ribonucleoside 5'-triphosphate = RNA(n+1) + diphosphate. Promotes RNA polymerase assembly. Latches the N- and C-terminal regions of the beta' subunit thereby facilitating its interaction with the beta and alpha subunits. The chain is DNA-directed RNA polymerase subunit omega from Salinispora tropica (strain ATCC BAA-916 / DSM 44818 / JCM 13857 / NBRC 105044 / CNB-440).